We begin with the raw amino-acid sequence, 201 residues long: Alanine--tRNA ligase (201 aa).

Belongs to the class-II aminoacyl-tRNA synthetase family. Zn(2+) serves as cofactor.

The protein localises to the cytoplasm. It carries out the reaction tRNA(Ala) + L-alanine + ATP = L-alanyl-tRNA(Ala) + AMP + diphosphate. Its function is as follows. Catalyzes the attachment of alanine to tRNA(Ala) in a two-step reaction: alanine is first activated by ATP to form Ala-AMP and then transferred to the acceptor end of tRNA(Ala). Also edits incorrectly charged Ser-tRNA(Ala) and Gly-tRNA(Ala) via its editing domain. The protein is Alanine--tRNA ligase (alaS) of Rhizobium leguminosarum bv. viciae.